The primary structure comprises 1197 residues: MDLYMMNCELLATCSALGYLEGGTYHKEPDCLESVKDLIRYLRHEDETRDVRQQLGAAQILQSDLLPILTQHRQDKPLFDAVIRLMVNLTQPALLCFGSVPKDSSVRHHFLQVLTYLQAYKEAFASEKAFGVLSETLYELLQLGWEDRQEEDNLLIERILLLVRNILHVPANLEQEKSIDDDASIHDRLLWAIHLSGMDDLLLFLSSSSAEQQWSLHVLEIISLMFRDQTPEQLAGVGQGRLAQERSTDVAELEVLRQREMAEKRARALQRGNRHSRFGGSYIVQGLKSIGEKDVVFHKGLHNLQNYSSDLGKQPRRVPKRRQAAQELSVHRRSVLNVRLFLRDFCSEFLENCYNPLMGAVKDHLLRERAQQHDETYYMWAMAFFMAFNRAATFRPGLVSETLSIRTFHFVEQNLTNYYEMMLTDRKEAASWARRMHLALKAYQELLATVNEMDMCPDEAVRESSRIIKNNIFYMMEYRELFLALFRKFDERYHPRSFLRDLVETTHLFLKMLERFCRSRGNLMVQNKRKKRKKKKKVQDQGVAFSQSPGELEAMWPALAEQLLQCAQDPELSVDPVVPFDAASEVPVEEQRVEAMVRIQDCLTAGQAPQALALLRSAREVWPEGNAFGSPVISPGEEMQLLKQILSTPLPRQQEPEEGDAEEEEEEEEEEELQVVQVSEKEFNFLEYLKRFASSTIVRAYVLLLRSYRQNSAHTNHCIAKMLHRLAHGLGMEALLFQLSLFCLFNRLLSDPAAAAYKELVTFAKYIIGKFFALAAVNQKAFVELLFWKNTAVVREMTQGYGSLDSGSSSHRAPLWSPEEEAQLQELYLAHKDVEGQDVVETILAHLKVVPRTRKQVIHHLVRMGLADSVKEFQKRKGTQIVLWTEDQELELQRLFEEFRDSDDVLGQIMKNITAKRSRARVVDKLLALGLVSERRQLYKKRRKKLAPSCMQNGEKSPRDPWQEDPEEEDEHLPEDESEDEESEEGLPSGQGQGSSSLSAENLGESLRQEGLSAPLLWLQSSLIRAANDREEDGCSQAIPLVPLTEENEEAMENEQFQHLLRKLGIRPPSSGQETFWRIPAKLSSTQLRRVAASLSQQENEEEREEEPEPGVPGEQGPSEEHRTEALRALLSARKRKAGLGPTEEEATGEEEWNSAPKKRQLLDSDEEEDDEGRRQAVSGTPRVHRKKRFQIEDEDD.

Positions 1–309 (MDLYMMNCEL…GLHNLQNYSS (309 aa)) are required for homodimerization and for interaction with CRY1 and CHEK1. Ser281 carries the post-translational modification Phosphoserine. 2 disordered regions span residues 647–674 (STPL…EELQ) and 943–1002 (RKKL…SAEN). The segment covering 656–673 (PEEGDAEEEEEEEEEEEL) has biased composition (acidic residues). The DNA-binding domain stretch occupies residues 810-949 (SHRAPLWSPE…KKRRKKLAPS (140 aa)). Over residues 963–985 (QEDPEEEDEHLPEDESEDEESEE) the composition is skewed to acidic residues. Low complexity predominate over residues 986-999 (GLPSGQGQGSSSLS). Positions 997–1095 (SLSAENLGES…TQLRRVAASL (99 aa)) are interaction with PARP1. Residues Ser1071 and Ser1084 each carry the phosphoserine modification. Residues 1079–1197 (IPAKLSSTQL…KRFQIEDEDD (119 aa)) form a required for nuclear localization region. Thr1086 carries the phosphothreonine modification. The interval 1088-1197 (LRRVAASLSQ…KRFQIEDEDD (110 aa)) is disordered. 2 stretches are compositionally biased toward acidic residues: residues 1099 to 1109 (ENEEEREEEPE) and 1143 to 1153 (TEEEATGEEEW). The residue at position 1165 (Ser1165) is a Phosphoserine.

Belongs to the timeless family. In terms of assembly, monomer. Homodimer or homomultimer. Component of the circadian core oscillator, which includes the CRY proteins, CLOCK or NPAS2, ARTNL/BMAL1 or ARTNL2/BMAL2, CSKN1D and/or CSNK1E, TIMELESS, and the PER proteins. Interacts directly with PER2; the interaction with PER2 is via its second PAS domain. Interacts directly with PER1 and PER3. Interacts with CRY1. Interacts with CRY2. Interacts with CHEK1, ATR and ATRIP. Interacts with CLSPN. Interacts (via N-terminus) with TIPIN. The TIMELESS-TIPIN heterodimer binds preferably to guanine-rich quadruplex-forming (G4) DNA structures. Associates with the MCM2-7 complex. Interacts with DNA polymerases alpha, delta and epsilon. Interacts with DDX11; this interaction increases recruitment of both proteins onto chromatin in response to replication stress induction by hydroxyurea. Interacts with PARP1; interaction is direct and independent of poly-ADP-ribose. Predominantly and robustly expressed in proliferative organs (spleen, thymus, intestine and testis) compared to those more differentiated such as kidney and liver (at protein level). Expressed in all tissues examined including brain, heart, lung, liver, skeletal muscle, kidney, placenta, pancreas, spleen, thymus and testis. Strongly expressed in the suprachiasmatic nucleus (SCN) and pars tuberalis, moderately in the cingulate cortex, pyrimidal cell layer of the piriform cortex, periventricular part of the caudate putamen, and granular layer of the cerebellum, and weakly in the cerebral cortex, gyrus dentatus, hippocampus and thalamic nuclei. In embryonic kidney, expression is highest in regions of active ureteric bud cell branching.

The protein resides in the nucleus. The protein localises to the chromosome. In terms of biological role, plays an important role in the control of DNA replication, maintenance of replication fork stability, maintenance of genome stability throughout normal DNA replication, DNA repair and in the regulation of the circadian clock. Required to stabilize replication forks during DNA replication by forming a complex with TIPIN: this complex regulates DNA replication processes under both normal and stress conditions, stabilizes replication forks and influences both CHEK1 phosphorylation and the intra-S phase checkpoint in response to genotoxic stress. During DNA replication, inhibits the CMG complex ATPase activity and activates DNA polymerases catalytic activities, coupling DNA unwinding and DNA synthesis. TIMELESS promotes TIPIN nuclear localization. Plays a role in maintaining processive DNA replication past genomic guanine-rich DNA sequences that form G-quadruplex (G4) structures, possibly together with DDX1. Involved in cell survival after DNA damage or replication stress by promoting DNA repair. In response to double-strand breaks (DSBs), accumulates at DNA damage sites and promotes homologous recombination repair via its interaction with PARP1. May be specifically required for the ATR-CHEK1 pathway in the replication checkpoint induced by hydroxyurea or ultraviolet light. Involved in the determination of period length and in the DNA damage-dependent phase advancing of the circadian clock. Negatively regulates CLOCK|NPAS2-ARTNL/BMAL1|ARTNL2/BMAL2-induced transactivation of PER1 possibly via translocation of PER1 into the nucleus. May also play an important role in epithelial cell morphogenesis and formation of branching tubules. This Mus musculus (Mouse) protein is Protein timeless homolog.